Reading from the N-terminus, the 168-residue chain is Small ribosomal subunit protein uS5 (168 aa).

The S5 DRBM domain maps to 17–80 (IEDQLVAVNR…EDGKKKMINV (64 aa)).

Belongs to the universal ribosomal protein uS5 family. As to quaternary structure, part of the 30S ribosomal subunit. Contacts proteins S4 and S8.

Functionally, with S4 and S12 plays an important role in translational accuracy. In terms of biological role, located at the back of the 30S subunit body where it stabilizes the conformation of the head with respect to the body. The chain is Small ribosomal subunit protein uS5 from Lactobacillus acidophilus (strain ATCC 700396 / NCK56 / N2 / NCFM).